We begin with the raw amino-acid sequence, 743 residues long: Tudor domain-containing protein 3 (743 aa).

Residues 241 to 262 (KTFGGGGGGARSNLNIGAAGHR) are disordered. The region spanning 286-326 (LVDEKALKHITEMGFSKEASRQALMDNANNLEAALNVLLNS) is the UBA domain. Disordered regions lie at residues 327-365 (SKQK…APST) and 380-549 (EEPK…CYER). The residue at position 349 (S349) is a Phosphoserine. Residues 414-431 (PRNDTRQPRNERPPRFQK) are compositionally biased toward basic and acidic residues. Residues 432–445 (DTPTSKSTVENSVL) are compositionally biased toward polar residues. A Phosphoserine modification is found at S438. Basic and acidic residues-rich tracts occupy residues 464-484 (AEER…KDAS) and 536-549 (RENQ…CYER). A Glycyl lysine isopeptide (Lys-Gly) (interchain with G-Cter in SUMO2) cross-link involves residue K563. The segment at 572 to 603 (TDYPRPVQSNSLGVPNGETAPPLKGRRVGPIK) is disordered. The 61-residue stretch at 647–707 (VWKPGDECFA…KPVQTEAWEE (61 aa)) folds into the Tudor domain. The span at 711–725 (YDHTIEFRRGGDGQP) shows a compositional bias: basic and acidic residues. The segment at 711–743 (YDHTIEFRRGGDGQPRRSTRPTQQFYQPPRARN) is disordered. Residues 723–743 (GQPRRSTRPTQQFYQPPRARN) are EBM motif; may mediate interaction with the EJC.

In terms of assembly, component of mRNA stress granules. Interacts with FMR1, FXR1, FXR2, EWSR1, FUS, SERBP1, EEF1A1 and DDX3X or DDX3Y, and with the small nuclear ribonucleoprotein-associated proteins SNRPB and SNRPN. Interacts with 'Lys-48'-linked tetra-ubiquitin, but not with monoubiquitin or 'Lys-63'-linked ubiquitin chains. May interact with the exon junction complex (EJC) composed at least of CASC3, EIF4A3, MAGOH and RBM8A. Interacts with POLR2A (via the C-terminal domain (CTD)).

Its subcellular location is the cytoplasm. It localises to the nucleus. In terms of biological role, scaffolding protein that specifically recognizes and binds dimethylarginine-containing proteins. Plays a role in the regulation of translation of target mRNAs by binding Arg/Gly-rich motifs (GAR) in dimethylarginine-containing proteins. In nucleus, acts as a coactivator: recognizes and binds asymmetric dimethylation on the core histone tails associated with transcriptional activation (H3R17me2a and H4R3me2a) and recruits proteins at these arginine-methylated loci. In cytoplasm, acts as an antiviral factor that participates in the assembly of stress granules together with G3BP1. This Mus musculus (Mouse) protein is Tudor domain-containing protein 3 (Tdrd3).